The following is a 204-amino-acid chain: Twist-related protein 1 (204 aa).

Low complexity predominate over residues 1–18 (MMQDVSSSPVSPADDSLS). The disordered stretch occupies residues 1 to 107 (MMQDVSSSPV…GGGSPQSYEE (107 aa)). The segment covering 34–43 (RGGRKRRSSR) has biased composition (basic residues). 2 stretches are compositionally biased toward gly residues: residues 46–65 (AGGG…GGDE) and 80–101 (GCGG…GGGS). Residues 110-161 (TQRVMANVRERQRTQSLNEAFAALRKIIPTLPSDKLSKIQTLKLAARYIDFL) form the bHLH domain. The segment at 163–193 (QVLQSDELDSKMASCSYVAHERFSYAFSVWR) is sufficient for transactivation activity.

As to quaternary structure, efficient DNA binding requires dimerization with another bHLH protein. Homodimer or heterodimer with E proteins such as TCF3. ID1 binds preferentially to TCF3 but does not interact efficiently with TWIST1 so ID1 levels control the amount of TCF3 available to dimerize with TWIST and thus determine the type of dimer formed.

The protein localises to the nucleus. Acts as a transcriptional regulator. Inhibits myogenesis by sequestrating E proteins, inhibiting trans-activation by MEF2, and inhibiting DNA-binding by MYOD1 through physical interaction. This interaction probably involves the basic domains of both proteins. Also represses expression of pro-inflammatory cytokines such as TNFA and IL1B. Regulates cranial suture patterning and fusion. Activates transcription as a heterodimer with E proteins. Regulates gene expression differentially, depending on dimer composition. Homodimers induce expression of FGFR2 and POSTN while heterodimers repress FGFR2 and POSTN expression and induce THBS1 expression. Heterodimerization is also required for osteoblast differentiation. Represses the activity of the circadian transcriptional activator: NPAS2-BMAL1 heterodimer. This Nomascus concolor (Black crested gibbon) protein is Twist-related protein 1 (TWIST1).